Here is a 101-residue protein sequence, read N- to C-terminus: Integration host factor subunit alpha (101 aa).

Belongs to the bacterial histone-like protein family. In terms of assembly, heterodimer of an alpha and a beta chain.

Its function is as follows. This protein is one of the two subunits of integration host factor, a specific DNA-binding protein that functions in genetic recombination as well as in transcriptional and translational control. This is Integration host factor subunit alpha from Dinoroseobacter shibae (strain DSM 16493 / NCIMB 14021 / DFL 12).